Reading from the N-terminus, the 75-residue chain is Conotoxin Vn5.6 (75 aa).

Residues 1-19 form the signal peptide; that stretch reads MLCLPVFIILLLLASPAAP. The propeptide occupies 20–59; that stretch reads NPLEKRIQSDLIRAALEDADMKTGEREILNIIDSISDVAK. Glutamine 60 carries the pyrrolidone carboxylic acid modification.

It belongs to the conotoxin T superfamily. Contains 2 disulfide bonds that can be either 'C1-C3, C2-C4' or 'C1-C4, C2-C3', since these disulfide connectivities have been observed for conotoxins with cysteine framework V (for examples, see AC P0DQQ7 and AC P81755). As to expression, expressed by the venom duct.

It is found in the secreted. The protein is Conotoxin Vn5.6 of Conus ventricosus (Mediterranean cone).